The sequence spans 298 residues: Protoheme IX farnesyltransferase (298 aa).

The next 9 membrane-spanning stretches (helical) occupy residues 16–36 (VVALIVFTALVGMFLAIPDMP), 45–65 (ALGFLGIWLAASAAAAINQLL), 93–113 (VFAGALIVISMTILVVWVNVI), 114–134 (TAVLTFASLIGYAVIYTVYLK), 141–161 (IVIGGLAGATPPMLGWAAVTG), 172–192 (SLLVLIIFIWTPPHFWALAIF), 223–243 (VLLAIVTLAPVAVGMSGVFYL), 244–264 (GGAIVLNAVFLWYAWRMLNPP), and 277–297 (IVYLMALFAFLMVDHLLLPWV).

This sequence belongs to the UbiA prenyltransferase family. Protoheme IX farnesyltransferase subfamily.

Its subcellular location is the cell inner membrane. It catalyses the reaction heme b + (2E,6E)-farnesyl diphosphate + H2O = Fe(II)-heme o + diphosphate. The protein operates within porphyrin-containing compound metabolism; heme O biosynthesis; heme O from protoheme: step 1/1. Converts heme B (protoheme IX) to heme O by substitution of the vinyl group on carbon 2 of heme B porphyrin ring with a hydroxyethyl farnesyl side group. This is Protoheme IX farnesyltransferase from Xanthomonas euvesicatoria pv. vesicatoria (strain 85-10) (Xanthomonas campestris pv. vesicatoria).